The chain runs to 107 residues: Phosphoribosyl-ATP pyrophosphatase (107 aa).

Belongs to the PRA-PH family.

The protein resides in the cytoplasm. The catalysed reaction is 1-(5-phospho-beta-D-ribosyl)-ATP + H2O = 1-(5-phospho-beta-D-ribosyl)-5'-AMP + diphosphate + H(+). Its pathway is amino-acid biosynthesis; L-histidine biosynthesis; L-histidine from 5-phospho-alpha-D-ribose 1-diphosphate: step 2/9. This is Phosphoribosyl-ATP pyrophosphatase from Bacillus cereus (strain ATCC 14579 / DSM 31 / CCUG 7414 / JCM 2152 / NBRC 15305 / NCIMB 9373 / NCTC 2599 / NRRL B-3711).